Consider the following 386-residue polypeptide: Arginine biosynthesis bifunctional protein ArgJ (386 aa).

Substrate-binding residues include threonine 148, lysine 170, threonine 181, glutamate 261, asparagine 381, and serine 386. Threonine 181 (nucleophile) is an active-site residue.

This sequence belongs to the ArgJ family. Heterotetramer of two alpha and two beta chains.

The protein localises to the cytoplasm. It carries out the reaction N(2)-acetyl-L-ornithine + L-glutamate = N-acetyl-L-glutamate + L-ornithine. The catalysed reaction is L-glutamate + acetyl-CoA = N-acetyl-L-glutamate + CoA + H(+). It participates in amino-acid biosynthesis; L-arginine biosynthesis; L-ornithine and N-acetyl-L-glutamate from L-glutamate and N(2)-acetyl-L-ornithine (cyclic): step 1/1. It functions in the pathway amino-acid biosynthesis; L-arginine biosynthesis; N(2)-acetyl-L-ornithine from L-glutamate: step 1/4. In terms of biological role, catalyzes two activities which are involved in the cyclic version of arginine biosynthesis: the synthesis of N-acetylglutamate from glutamate and acetyl-CoA as the acetyl donor, and of ornithine by transacetylation between N(2)-acetylornithine and glutamate. This Corynebacterium diphtheriae (strain ATCC 700971 / NCTC 13129 / Biotype gravis) protein is Arginine biosynthesis bifunctional protein ArgJ.